The sequence spans 177 residues: Large ribosomal subunit protein uL6 (177 aa).

This sequence belongs to the universal ribosomal protein uL6 family. As to quaternary structure, part of the 50S ribosomal subunit.

This protein binds to the 23S rRNA, and is important in its secondary structure. It is located near the subunit interface in the base of the L7/L12 stalk, and near the tRNA binding site of the peptidyltransferase center. In Agrobacterium fabrum (strain C58 / ATCC 33970) (Agrobacterium tumefaciens (strain C58)), this protein is Large ribosomal subunit protein uL6.